Reading from the N-terminus, the 354-residue chain is Phosphoribosylformylglycinamidine cyclo-ligase (354 aa).

It belongs to the AIR synthase family.

It is found in the cytoplasm. The enzyme catalyses 2-formamido-N(1)-(5-O-phospho-beta-D-ribosyl)acetamidine + ATP = 5-amino-1-(5-phospho-beta-D-ribosyl)imidazole + ADP + phosphate + H(+). It functions in the pathway purine metabolism; IMP biosynthesis via de novo pathway; 5-amino-1-(5-phospho-D-ribosyl)imidazole from N(2)-formyl-N(1)-(5-phospho-D-ribosyl)glycinamide: step 2/2. The chain is Phosphoribosylformylglycinamidine cyclo-ligase from Synechococcus sp. (strain JA-2-3B'a(2-13)) (Cyanobacteria bacterium Yellowstone B-Prime).